Consider the following 644-residue polypeptide: Exoribonuclease 2 (644 aa).

In terms of domain architecture, RNB spans 189-516 (REDLTALDFV…NHRLLKAVIK (328 aa)). Positions 561-643 (DTRFAAEIVD…ETRSIIARPV (83 aa)) constitute an S1 motif domain.

The protein belongs to the RNR ribonuclease family. RNase II subfamily.

It is found in the cytoplasm. The enzyme catalyses Exonucleolytic cleavage in the 3'- to 5'-direction to yield nucleoside 5'-phosphates.. In terms of biological role, involved in mRNA degradation. Hydrolyzes single-stranded polyribonucleotides processively in the 3' to 5' direction. The polypeptide is Exoribonuclease 2 (Escherichia coli O17:K52:H18 (strain UMN026 / ExPEC)).